We begin with the raw amino-acid sequence, 59 residues long: MCVKFTDAEIAYIKESVENYSSEFDIYDDEQELKLKIYEQIMLKIKSEYKDTYLFRLIN.

Functionally, excisionase and integrase are necessary for the excision of prophage from the host genome by site-specific recombination at the att site. The protein is Excisionase (xis) of Staphylococcus phage L54a (Bacteriophage L54a).